Consider the following 133-residue polypeptide: Small ribosomal subunit protein uS9 (133 aa).

The span at 95-113 (GDSKQELKSRGFLTRDPRK) shows a compositional bias: basic and acidic residues. The disordered stretch occupies residues 95 to 133 (GDSKQELKSRGFLTRDPRKKERKKYGHKKARKSFQFSKR). Residues 114-133 (KERKKYGHKKARKSFQFSKR) show a composition bias toward basic residues.

This sequence belongs to the universal ribosomal protein uS9 family.

In Chlamydia felis (strain Fe/C-56) (Chlamydophila felis), this protein is Small ribosomal subunit protein uS9.